We begin with the raw amino-acid sequence, 396 residues long: Peptide chain release factor 1, mitochondrial (396 aa).

N5-methylglutamine is present on Gln-268. Residues 317-340 (LEKEEKERNARKDQVSTTDRSDKI) are disordered.

Belongs to the prokaryotic/mitochondrial release factor family. In terms of processing, methylation of glutamine in the GGQ triplet is conserved from bacteria to mammals.

It is found in the mitochondrion. Functionally, mitochondrial peptide chain release factor that directs the termination of translation in response to the peptide chain termination codons UAA and UAG. The sequence is that of Peptide chain release factor 1, mitochondrial (MRF1) from Kluyveromyces lactis (strain ATCC 8585 / CBS 2359 / DSM 70799 / NBRC 1267 / NRRL Y-1140 / WM37) (Yeast).